The primary structure comprises 425 residues: Pre-mRNA-splicing factor PRP46 (425 aa).

WD repeat units lie at residues 111 to 151, 154 to 193, 196 to 235, 238 to 279, 281 to 320, 322 to 360, and 371 to 410; these read GHTG…LKVT, GHIM…VVRD, GTLS…CVLT, GHRG…KTLT, HKRN…TNFN, EALG…KFQK, and ESEK…TQDS.

Belongs to the WD repeat PRL1/PRL2 family. As to quaternary structure, associated with the spliceosome.

It localises to the cytoplasm. The protein resides in the nucleus. Functionally, involved in pre-mRNA splicing and required for cell cycle progression at G2/M. This is Pre-mRNA-splicing factor PRP46 (PRP46) from Eremothecium gossypii (strain ATCC 10895 / CBS 109.51 / FGSC 9923 / NRRL Y-1056) (Yeast).